Here is a 229-residue protein sequence, read N- to C-terminus: Large ribosomal subunit protein uL1 (229 aa).

It belongs to the universal ribosomal protein uL1 family. In terms of assembly, part of the 50S ribosomal subunit.

Functionally, binds directly to 23S rRNA. The L1 stalk is quite mobile in the ribosome, and is involved in E site tRNA release. Its function is as follows. Protein L1 is also a translational repressor protein, it controls the translation of the L11 operon by binding to its mRNA. This is Large ribosomal subunit protein uL1 from Streptococcus gordonii (strain Challis / ATCC 35105 / BCRC 15272 / CH1 / DL1 / V288).